The sequence spans 320 residues: Pyrroline-5-carboxylate reductase 2 (320 aa).

Position 2 is an N-acetylserine (S2). NADP(+) is bound by residues 6–11 and S34; that span reads IGAGQL. 9 residues coordinate NADPH: A8, Q10, L11, S34, E36, N56, V70, K71, and A97. NADP(+)-binding positions include N56, 69 to 72, and 95 to 97; these read AVKP and CAA. Position 164 (E164) interacts with L-proline. NADPH is bound at residue N230. Positions 237 and 238 each coordinate L-proline. Residues 293–320 are disordered; that stretch reads ESPTVSTLAPPSSGKLLTRNPAQGSKRE. At S304 the chain carries Phosphoserine.

Belongs to the pyrroline-5-carboxylate reductase family. Homodecamer; composed of 5 homodimers. Interacts with LTO1.

It localises to the cytoplasm. Its subcellular location is the mitochondrion. The catalysed reaction is L-proline + NADP(+) = (S)-1-pyrroline-5-carboxylate + NADPH + 2 H(+). It carries out the reaction L-proline + NAD(+) = (S)-1-pyrroline-5-carboxylate + NADH + 2 H(+). It participates in amino-acid biosynthesis; L-proline biosynthesis; L-proline from L-glutamate 5-semialdehyde: step 1/1. In terms of biological role, oxidoreductase that catalyzes the last step in proline biosynthesis, which corresponds to the reduction of pyrroline-5-carboxylate to L-proline using NAD(P)H. At physiologic concentrations, has higher specific activity in the presence of NADH. Involved in cellular response to oxidative stress. In some cell types, such as erythrocytes, its primary function may be the generation of NADP(+). This is Pyrroline-5-carboxylate reductase 2 from Rattus norvegicus (Rat).